The primary structure comprises 459 residues: Neuronal acetylcholine receptor subunit beta-2 (459 aa).

At 1–203 (LRSDFLLGPE…ITYDFVIKRK (203 aa)) the chain is on the extracellular side. Residues asparagine 21 and asparagine 138 are each glycosylated (N-linked (GlcNAc...) asparagine). Cysteines 125 and 139 form a disulfide. The chain crosses the membrane as a helical span at residues 204–228 (PLFYTINLIIPCVLITSLAILVFYL). At 229–235 (PSDCGEK) the chain is on the cytoplasmic side. The helical transmembrane segment at 236-254 (VTLCMSVLLALTVFLLLIS) threads the bilayer. The Extracellular portion of the chain corresponds to 255 to 269 (KIVPPTSLAVPLIGK). The helical transmembrane segment at 270–291 (YLMFTMVLVTFSIVTSVCVLNV) threads the bilayer. Topologically, residues 292-421 (HHRSPSTHYM…WKYVAMVIDR (130 aa)) are cytoplasmic. Residues 422 to 440 (LFLWIFILVCVVGTLGLFV) form a helical membrane-spanning segment.

This sequence belongs to the ligand-gated ion channel (TC 1.A.9) family. Acetylcholine receptor (TC 1.A.9.1) subfamily. Beta-2/CHRNB2 sub-subfamily. As to quaternary structure, neuronal AChR is a heteropentamer composed of two different types of subunits: alpha and beta. CHRNB2/Beta-2 subunit can be combined to CHRNA2/alpha-2, CHRNA3/alpha-3 or CHRNA4/alpha-4, CHRNA5/alpha-5, CHRNA6/alpha-6 and CHRNB3/beta-3 to give rise to functional receptors.

It localises to the synaptic cell membrane. The protein localises to the cell membrane. The catalysed reaction is Ca(2+)(in) = Ca(2+)(out). It carries out the reaction K(+)(in) = K(+)(out). It catalyses the reaction Na(+)(in) = Na(+)(out). With respect to regulation, activated by a myriad of ligands such as acetylcholine, cytisine, nicotine, choline and epibatidine. nAChR activity is inhibited by the antagonist alpha-conotoxins BuIA, PnIA, PnIC, GID and MII, small disulfide-constrained peptides from cone snails. Functionally, component of neuronal acetylcholine receptors (nAChRs) that function as pentameric, ligand-gated cation channels with high calcium permeability among other activities. nAChRs are excitatory neurotrasnmitter receptors formed by a collection of nAChR subunits known to mediate synaptic transmission in the nervous system and the neuromuscular junction. Each nAchR subunit confers differential attributes to channel properties, including activation, deactivation and desensitization kinetics, pH sensitivity, cation permeability, and binding to allosteric modulators. CHRNB2 forms heteropentameric neuronal acetylcholine receptors with CHRNA2, CHRNA3, CHRNA4 and CHRNA6, as well as CHRNA5 and CHRNB3 as accesory subunits. This is Neuronal acetylcholine receptor subunit beta-2 (chrnb2) from Carassius auratus (Goldfish).